The sequence spans 366 residues: Chitoporin (366 aa).

Residues 1 to 23 form the signal peptide; sequence MDKMFKRTVIGAAVALASTGLMA.

It belongs to the Gram-negative porin family.

Its subcellular location is the cell outer membrane. Its function is as follows. Involved in the uptake of chitosugars. The protein is Chitoporin (chiP) of Vibrio furnissii.